A 1783-amino-acid polypeptide reads, in one-letter code: 6-methylsalicylic acid synthase (1783 aa).

Residues 1–31 (MITSTSSTEVLTPANGSDDSKGTTTPATSSG) show a composition bias toward polar residues. Residues 1-40 (MITSTSSTEVLTPANGSDDSKGTTTPATSSGDPEMHDDLL) form a disordered region. The region spanning 45-474 (HDDVAIIGMA…GTVSHAIIEA (430 aa)) is the Ketosynthase family 3 (KS3) domain. Catalysis depends on for beta-ketoacyl synthase activity residues C217, H352, and H394. The segment at 587–884 (WVFSGHGAQW…TPTMVRKQPA (298 aa)) is malonyl-CoA:ACP transacylase (MAT) domain. The For acyl/malonyl transferase activity role is filled by S673. Residues 942–1215 (THKPAANDLL…AFAGVEGESL (274 aa)) form a product template (PT) domain region. The tract at residues 948–1064 (NDLLGTRTAL…ATVGADATPS (117 aa)) is N-terminal hotdog fold. Residues 948–1216 (NDLLGTRTAL…FAGVEGESLS (269 aa)) form the PKS/mFAS DH domain. Catalysis depends on H980, which acts as the Proton acceptor; for dehydratase activity. The C-terminal hotdog fold stretch occupies residues 1078–1216 (PQKLSDSFSI…FAGVEGESLS (139 aa)). D1130 functions as the Proton donor; for dehydratase activity in the catalytic mechanism. Positions 1707–1781 (EYVLVVVKKC…HLVEYFCQVL (75 aa)) constitute a Carrier domain. Position 1741 is an O-(pantetheine 4'-phosphoryl)serine (S1741).

It carries out the reaction 3 malonyl-CoA + acetyl-CoA + NADPH + 3 H(+) = 6-methylsalicylate + 3 CO2 + NADP(+) + 4 CoA + H2O. The protein operates within secondary metabolite biosynthesis; terpenoid biosynthesis. Non-reducing polyketide synthase; part of the gene cluster that mediates the biosynthesis of macrophorins, isoprenoid epoxycyclohexenones containing cyclized drimane moieties. The first step of the pathway is the synthesis of 6-methylsalicylic acid (6-MSA) by the polyketide synthase macA. 6-MSA is then converted to m-cresol by the decarboxylase macB. The cytochrome P450 monooxygenase macC then catalyzes the oxidation of m-cresol to toluquinol. Epoxidation of toluquinol is then performed by the short chain dehydrogenase macD, with the help of macE, and a further prenylation by macG leads to 7-deacetoxyyanuthone A. The next step is the hydroxylation of C-22 of 7-deacetoxyyanuthone A by the cytochrome P450 monooxygenase macH to yield 22-deacetylyanuthone A. O-Mevalon transferase macI then attaches mevalon to the hydroxyl group of 22-deacetylyanuthone A to produce yanuthone E. The terpene cyclase macJ catalyzes the cyclization of 22-deacetylyanuthone A to macrophorin A. MacJ is also able to catalyze cyclization of yanuthone E and 7-deacetoxyyanuthone A to their corresponding macrophorins. The macJ products can be further modified by macH and macJ, as well as by the FAD-dependent monooxygenase macF, to produce additional macrophorins, including 4'-oxomacrophorin A, 4'-oxomacrophorin D and 4'-oxomacrophorin E. The polypeptide is 6-methylsalicylic acid synthase (Penicillium terrestre).